The following is a 255-amino-acid chain: Type III pantothenate kinase (255 aa).

6–13 (DVGNTNIV) contacts ATP. Substrate is bound by residues Y100 and 107–110 (GADR). The active-site Proton acceptor is the D109. D129 contacts K(+). T132 is a binding site for ATP. T184 contributes to the substrate binding site.

Belongs to the type III pantothenate kinase family. Homodimer. It depends on NH4(+) as a cofactor. K(+) serves as cofactor.

It is found in the cytoplasm. It carries out the reaction (R)-pantothenate + ATP = (R)-4'-phosphopantothenate + ADP + H(+). Its pathway is cofactor biosynthesis; coenzyme A biosynthesis; CoA from (R)-pantothenate: step 1/5. Its function is as follows. Catalyzes the phosphorylation of pantothenate (Pan), the first step in CoA biosynthesis. The chain is Type III pantothenate kinase from Caldanaerobacter subterraneus subsp. tengcongensis (strain DSM 15242 / JCM 11007 / NBRC 100824 / MB4) (Thermoanaerobacter tengcongensis).